We begin with the raw amino-acid sequence, 100 residues long: Putative pterin-4-alpha-carbinolamine dehydratase (100 aa).

The protein belongs to the pterin-4-alpha-carbinolamine dehydratase family.

It carries out the reaction (4aS,6R)-4a-hydroxy-L-erythro-5,6,7,8-tetrahydrobiopterin = (6R)-L-erythro-6,7-dihydrobiopterin + H2O. The chain is Putative pterin-4-alpha-carbinolamine dehydratase from Alteromonas mediterranea (strain DSM 17117 / CIP 110805 / LMG 28347 / Deep ecotype).